Here is a 252-residue protein sequence, read N- to C-terminus: MMTKRIIPCLDVKEGRVVKGVQFLGLKDAGDPVELAQIYDEEGADELVFLDISASHEGRKTMVDVVKQVASTLAIPFTVGGGINHLDDMKRILRAGADKVSVNTAAVLRPELISEGADFFGSQCIVVAIDAKYVEEKKAYMVYTHGGRRQTDIEVSDWAKEAVLRGAGEILLTSMDADGEKKGFDHRLTKLVSEAVTVPVIASGGAGNAQHMLEAFTKGEADAALAASIFHYKETSIQEVKTYLKEHGVKVR.

Residues Asp-11 and Asp-130 contribute to the active site.

Belongs to the HisA/HisF family. Heterodimer of HisH and HisF.

The protein resides in the cytoplasm. The enzyme catalyses 5-[(5-phospho-1-deoxy-D-ribulos-1-ylimino)methylamino]-1-(5-phospho-beta-D-ribosyl)imidazole-4-carboxamide + L-glutamine = D-erythro-1-(imidazol-4-yl)glycerol 3-phosphate + 5-amino-1-(5-phospho-beta-D-ribosyl)imidazole-4-carboxamide + L-glutamate + H(+). Its pathway is amino-acid biosynthesis; L-histidine biosynthesis; L-histidine from 5-phospho-alpha-D-ribose 1-diphosphate: step 5/9. In terms of biological role, IGPS catalyzes the conversion of PRFAR and glutamine to IGP, AICAR and glutamate. The HisF subunit catalyzes the cyclization activity that produces IGP and AICAR from PRFAR using the ammonia provided by the HisH subunit. This is Imidazole glycerol phosphate synthase subunit HisF from Bacillus pumilus (strain SAFR-032).